The following is a 318-amino-acid chain: Mitochondrial coenzyme A transporter SLC25A42 (318 aa).

Solcar repeat units lie at residues Arg31–Ile117, Leu129–Leu214, and Pro224–Leu312. Transmembrane regions (helical) follow at residues Val33–Pro53, Leu89–Ser109, Leu135–Val155, Leu186–Phe206, Met230–Val250, and Leu293–Leu313.

The protein belongs to the mitochondrial carrier (TC 2.A.29) family. As to expression, widely expressed. Highly expressed in adipose, followed by hypothalamus and brain coronal sections containing corpus callosum, fornix, thalamus, hypothalamus, optic chiasm, pons, midbrain, and cerebellum.

It is found in the mitochondrion inner membrane. The catalysed reaction is ADP(out) + CoA(in) = ADP(in) + CoA(out). It catalyses the reaction 3'-dephospho-CoA(in) + ADP(out) = 3'-dephospho-CoA(out) + ADP(in). It carries out the reaction adenosine 3',5'-bisphosphate(in) + ADP(out) = adenosine 3',5'-bisphosphate(out) + ADP(in). The enzyme catalyses AMP(in) + ADP(out) = AMP(out) + ADP(in). The catalysed reaction is dADP(in) + ADP(out) = dADP(out) + ADP(in). It catalyses the reaction ADP(in) + ATP(out) = ADP(out) + ATP(in). Mitochondrial carrier mediating the transport of coenzyme A (CoA) in mitochondria in exchange for intramitochondrial (deoxy)adenine nucleotides and adenosine 3',5'-diphosphate. This is Mitochondrial coenzyme A transporter SLC25A42 (Slc25a42) from Rattus norvegicus (Rat).